Consider the following 147-residue polypeptide: uncharacterized protein (147 aa).

2 consecutive 4Fe-4S ferredoxin-type domains span residues 80–109 and 110–141; these read WYPK…AENG and KVVV…FPDE. 8 residues coordinate [4Fe-4S] cluster: Cys89, Cys92, Cys95, Cys99, Cys119, Cys123, Cys126, and Cys130.

[4Fe-4S] cluster is required as a cofactor.

This is an uncharacterized protein from Methanocaldococcus jannaschii (strain ATCC 43067 / DSM 2661 / JAL-1 / JCM 10045 / NBRC 100440) (Methanococcus jannaschii).